Consider the following 214-residue polypeptide: Probable transaldolase (214 aa).

The active-site Schiff-base intermediate with substrate is the Lys-83.

It belongs to the transaldolase family. Type 3B subfamily.

It is found in the cytoplasm. It catalyses the reaction D-sedoheptulose 7-phosphate + D-glyceraldehyde 3-phosphate = D-erythrose 4-phosphate + beta-D-fructose 6-phosphate. Its pathway is carbohydrate degradation; pentose phosphate pathway; D-glyceraldehyde 3-phosphate and beta-D-fructose 6-phosphate from D-ribose 5-phosphate and D-xylulose 5-phosphate (non-oxidative stage): step 2/3. Transaldolase is important for the balance of metabolites in the pentose-phosphate pathway. The chain is Probable transaldolase from Streptococcus pyogenes serotype M2 (strain MGAS10270).